We begin with the raw amino-acid sequence, 398 residues long: 1-deoxy-D-xylulose 5-phosphate reductoisomerase (398 aa).

NADPH-binding residues include Thr-10, Gly-11, Ser-12, Ile-13, Gly-36, Lys-37, Asn-38, and Asn-124. Lys-125 is a binding site for 1-deoxy-D-xylulose 5-phosphate. Glu-126 provides a ligand contact to NADPH. Asp-150 contacts Mn(2+). Positions 151, 152, 186, and 209 each coordinate 1-deoxy-D-xylulose 5-phosphate. Glu-152 contributes to the Mn(2+) binding site. NADPH is bound at residue Gly-215. 4 residues coordinate 1-deoxy-D-xylulose 5-phosphate: Ser-222, Asn-227, Lys-228, and Glu-231. Residue Glu-231 coordinates Mn(2+).

The protein belongs to the DXR family. Homodimer. It depends on Mg(2+) as a cofactor. Mn(2+) serves as cofactor.

The enzyme catalyses 2-C-methyl-D-erythritol 4-phosphate + NADP(+) = 1-deoxy-D-xylulose 5-phosphate + NADPH + H(+). It participates in isoprenoid biosynthesis; isopentenyl diphosphate biosynthesis via DXP pathway; isopentenyl diphosphate from 1-deoxy-D-xylulose 5-phosphate: step 1/6. Functionally, catalyzes the NADPH-dependent rearrangement and reduction of 1-deoxy-D-xylulose-5-phosphate (DXP) to 2-C-methyl-D-erythritol 4-phosphate (MEP). This is 1-deoxy-D-xylulose 5-phosphate reductoisomerase from Escherichia coli O157:H7.